Reading from the N-terminus, the 248-residue chain is 2,3-bisphosphoglycerate-dependent phosphoglycerate mutase (248 aa).

Residues Arg8–Asn15, Thr21–Gly22, Arg60, Glu87–Tyr90, Lys98, Arg114–Arg115, and Gly183–Asn184 each bind substrate. Catalysis depends on His9, which acts as the Tele-phosphohistidine intermediate. Glu87 serves as the catalytic Proton donor/acceptor.

The protein belongs to the phosphoglycerate mutase family. BPG-dependent PGAM subfamily.

It catalyses the reaction (2R)-2-phosphoglycerate = (2R)-3-phosphoglycerate. It functions in the pathway carbohydrate degradation; glycolysis; pyruvate from D-glyceraldehyde 3-phosphate: step 3/5. Its function is as follows. Catalyzes the interconversion of 2-phosphoglycerate and 3-phosphoglycerate. This chain is 2,3-bisphosphoglycerate-dependent phosphoglycerate mutase, found in Borreliella afzelii (strain PKo) (Borrelia afzelii).